A 462-amino-acid polypeptide reads, in one-letter code: NEDD8-activating enzyme E1 catalytic subunit (462 aa).

A2 is subject to N-acetylalanine. The tract at residues 53–70 (HPDFEPSTESLQFLLDTC) is interaction with UBE2M N-terminus. ATP contacts are provided by residues 100-124 (DMDT…GRPK) and 148-171 (IQDF…SIIA). Interaction with UBE2M N-terminus stretches follow at residues 157–161 (RQFHI) and 192–217 (PSSI…LPGM). Positions 227-229 (LYP) are interaction with NEDD8. The active-site Glycyl thioester intermediate is C237. Interaction with NAE1 stretches follow at residues 242 to 248 (MPRLPEH) and 292 to 295 (YNIR). The interval 331–338 (IATSAYIP) is interaction with UBE2M N-terminus. The segment at 352–357 (YTYTFE) is interaction with NEDD8. The interval 368–462 (SQLPQNIQFS…QTVLFKLHFT (95 aa)) is interaction with UBE2M core domain.

This sequence belongs to the ubiquitin-activating E1 family. UBA3 subfamily. Heterodimer of UBA3 and NAE1. Interacts with NEDD8, UBE2F and UBE2M. Binds ESR1 and ESR2 with bound steroid ligand. Interacts with TBATA. In terms of tissue distribution, ubiquitously expressed.

The enzyme catalyses ATP + [NEDD8 protein] + [E1 NEDD8-activating enzyme]-L-cysteine = AMP + diphosphate + [E1 NEDD8-activating enzyme]-S-[NEDD8 protein]-yl-L-cysteine.. It participates in protein modification; protein neddylation. Its activity is regulated as follows. Binding of TP53BP2 to the regulatory subunit NAE1 decreases activity. Functionally, catalytic subunit of the dimeric UBA3-NAE1 E1 enzyme. E1 activates NEDD8 by first adenylating its C-terminal glycine residue with ATP, thereafter linking this residue to the side chain of the catalytic cysteine, yielding a NEDD8-UBA3 thioester and free AMP. E1 finally transfers NEDD8 to the catalytic cysteine of UBE2M. Down-regulates steroid receptor activity. Necessary for cell cycle progression. The polypeptide is NEDD8-activating enzyme E1 catalytic subunit (Uba3) (Rattus norvegicus (Rat)).